A 337-amino-acid chain; its full sequence is MYIKELTETDEEKRERSVEDNVDDGDKAVLVSRGNVIVLTTKRALVGVGARALFYPTLVYNVVRNKLESEFRWWDRVAEFILLGAVPFPSDVPQLKELGVCGVITLNEPYETLVPSSLYKSYCIDHLVIATRDYCFAPSMEAICQAVEFIHRNASLGKTTYVHCKAGRGRSTTIVICYLVQHKNMTPEAAYSYVRSIRPRVLLAAAQWKAVVEYYHVKVLNTQSCLTDATSALIPRNVKQVCSGNVVVFDDGSMVVVTHSDLEGYNDDDSRSRRSVKVNGNELWAAAADLSMVYRVKVVGQAAMARISCLWLGLREDQKLSGKNLSMGGISVDISVY.

Residues M1–D20 are disordered. Residues Y55 and D133 each coordinate substrate. Positions W73–L220 constitute a Tyrosine-protein phosphatase domain. C164 serves as the catalytic Phosphocysteine intermediate. The short motif at C164–R170 is the Glucan phosphatase signature motif CXAGXGR element. Residue K165–R170 participates in substrate binding.

It belongs to the protein-tyrosine phosphatase family. Non-receptor class dual specificity subfamily. Expressed in stems, roots, flowers, mature seeds and leaves.

The catalysed reaction is O-phospho-L-seryl-[protein] + H2O = L-seryl-[protein] + phosphate. The enzyme catalyses O-phospho-L-threonyl-[protein] + H2O = L-threonyl-[protein] + phosphate. It carries out the reaction O-phospho-L-tyrosyl-[protein] + H2O = L-tyrosyl-[protein] + phosphate. It catalyses the reaction a 1,2-diacyl-sn-glycero-3-phospho-(1'-sn-glycero-3'-phosphate) + H2O = a 1,2-diacyl-sn-glycero-3-phospho-(1'-sn-glycerol) + phosphate. The protein operates within phospholipid metabolism; phosphatidylglycerol biosynthesis; phosphatidylglycerol from CDP-diacylglycerol: step 2/2. Exhibits phosphatidylglycerophosphate phosphatase activity. Involved in root growth and columella cells organization. May possess protein phosphatase activity. This is Phosphatidylglycerophosphate phosphatase PTPMT1 from Arabidopsis thaliana (Mouse-ear cress).